We begin with the raw amino-acid sequence, 263 residues long: Protein PYRICULARIA ORYZAE RESISTANCE 21 (263 aa).

Positions 1–68 (MGILVISVDL…IWCKAGKIIK (68 aa)) constitute an HMA domain. Residues Cys-12 and Cys-15 each coordinate a metal cation. A disordered region spans residues 126–153 (CEKPKPCEKPPPCKPEEPPKPPPEKPPP). The span at 139 to 153 (KPEEPPKPPPEKPPP) shows a compositional bias: basic and acidic residues.

Its function is as follows. Involved in defense responses. Contributes to slowing defense responses toward Magnaporthe oryzae. In Oryza sativa subsp. indica (Rice), this protein is Protein PYRICULARIA ORYZAE RESISTANCE 21.